Consider the following 291-residue polypeptide: Acetyl-coenzyme A carboxylase carboxyl transferase subunit beta (291 aa).

Positions 1-23 (MSWLSKLMPSGIRTDNTPSKKRS) are disordered. In terms of domain architecture, CoA carboxyltransferase N-terminal spans 28–291 (LWEKCSNCGS…LGRQPAPEVA (264 aa)). The Zn(2+) site is built by C32, C35, C51, and C54. The C4-type zinc-finger motif lies at 32–54 (CSNCGSALYRPELEENLEVCPKC).

It belongs to the AccD/PCCB family. Acetyl-CoA carboxylase is a heterohexamer composed of biotin carboxyl carrier protein (AccB), biotin carboxylase (AccC) and two subunits each of ACCase subunit alpha (AccA) and ACCase subunit beta (AccD). Zn(2+) serves as cofactor.

The protein resides in the cytoplasm. It catalyses the reaction N(6)-carboxybiotinyl-L-lysyl-[protein] + acetyl-CoA = N(6)-biotinyl-L-lysyl-[protein] + malonyl-CoA. Its pathway is lipid metabolism; malonyl-CoA biosynthesis; malonyl-CoA from acetyl-CoA: step 1/1. In terms of biological role, component of the acetyl coenzyme A carboxylase (ACC) complex. Biotin carboxylase (BC) catalyzes the carboxylation of biotin on its carrier protein (BCCP) and then the CO(2) group is transferred by the transcarboxylase to acetyl-CoA to form malonyl-CoA. This is Acetyl-coenzyme A carboxylase carboxyl transferase subunit beta from Stenotrophomonas maltophilia (strain R551-3).